A 254-amino-acid chain; its full sequence is Dihydroorotate dehydrogenase B (NAD(+)), electron transfer subunit (254 aa).

One can recognise an FAD-binding FR-type domain in the interval 1–99 (MLQTEMKVIQ…LGPLGKGFDL (99 aa)). Residues 50-53 (RPIS), 67-69 (LYR), and 74-75 (GT) each bind FAD. Cys218, Cys223, Cys226, and Cys241 together coordinate [2Fe-2S] cluster.

Belongs to the PyrK family. In terms of assembly, heterotetramer of 2 PyrK and 2 PyrD type B subunits. The cofactor is [2Fe-2S] cluster. FAD serves as cofactor.

It participates in pyrimidine metabolism; UMP biosynthesis via de novo pathway; orotate from (S)-dihydroorotate (NAD(+) route): step 1/1. Its function is as follows. Responsible for channeling the electrons from the oxidation of dihydroorotate from the FMN redox center in the PyrD type B subunit to the ultimate electron acceptor NAD(+). This Listeria innocua serovar 6a (strain ATCC BAA-680 / CLIP 11262) protein is Dihydroorotate dehydrogenase B (NAD(+)), electron transfer subunit.